Reading from the N-terminus, the 141-residue chain is Hemoglobin subunit alpha (141 aa).

One can recognise a Globin domain in the interval 1 to 141 (VLSPDDKKHV…VSTVLTSKYR (141 aa)). S3 is modified (phosphoserine). N6-succinyllysine occurs at positions 7 and 11. Position 16 is an N6-acetyllysine; alternate (K16). The residue at position 16 (K16) is an N6-succinyllysine; alternate. The residue at position 24 (Y24) is a Phosphotyrosine. S35 is modified (phosphoserine). K40 carries the N6-succinyllysine modification. The residue at position 49 (S49) is a Phosphoserine. Residue H58 coordinates O2. H87 serves as a coordination point for heme b. The residue at position 102 (S102) is a Phosphoserine. Phosphothreonine is present on T108. Phosphoserine occurs at positions 124 and 131. Phosphothreonine occurs at positions 134 and 137. The residue at position 138 (S138) is a Phosphoserine.

The protein belongs to the globin family. As to quaternary structure, heterotetramer of two alpha chains and two beta chains. As to expression, red blood cells.

Its function is as follows. Involved in oxygen transport from the lung to the various peripheral tissues. Functionally, hemopressin acts as an antagonist peptide of the cannabinoid receptor CNR1. Hemopressin-binding efficiently blocks cannabinoid receptor CNR1 and subsequent signaling. This is Hemoglobin subunit alpha (HBA) from Theropithecus gelada (Gelada baboon).